We begin with the raw amino-acid sequence, 364 residues long: Dihydroorotate dehydrogenase (quinone) (364 aa).

FMN-binding positions include 78–82 (AGFDK) and Thr-102. Residue Lys-82 coordinates substrate. Residue 127–131 (NRMGF) coordinates substrate. FMN-binding residues include Asn-156 and Asn-189. Position 189 (Asn-189) interacts with substrate. Ser-192 acts as the Nucleophile in catalysis. Asn-194 is a substrate binding site. FMN is bound by residues Lys-227 and Thr-255. 256–257 (NT) is a binding site for substrate. Residues Gly-285, Gly-314, and 335–336 (YT) contribute to the FMN site.

Belongs to the dihydroorotate dehydrogenase family. Type 2 subfamily. Monomer. The cofactor is FMN.

The protein resides in the cell membrane. The enzyme catalyses (S)-dihydroorotate + a quinone = orotate + a quinol. It functions in the pathway pyrimidine metabolism; UMP biosynthesis via de novo pathway; orotate from (S)-dihydroorotate (quinone route): step 1/1. Catalyzes the conversion of dihydroorotate to orotate with quinone as electron acceptor. The protein is Dihydroorotate dehydrogenase (quinone) of Thermosynechococcus vestitus (strain NIES-2133 / IAM M-273 / BP-1).